Reading from the N-terminus, the 170-residue chain is ATP synthase subunit b (170 aa).

A helical transmembrane segment spans residues 30–50; that stretch reads FFFVLAIFLVVLGVIGTFVVP.

The protein belongs to the ATPase B chain family. F-type ATPases have 2 components, F(1) - the catalytic core - and F(0) - the membrane proton channel. F(1) has five subunits: alpha(3), beta(3), gamma(1), delta(1), epsilon(1). F(0) has three main subunits: a(1), b(2) and c(10-14). The alpha and beta chains form an alternating ring which encloses part of the gamma chain. F(1) is attached to F(0) by a central stalk formed by the gamma and epsilon chains, while a peripheral stalk is formed by the delta and b chains.

It localises to the cell membrane. In terms of biological role, f(1)F(0) ATP synthase produces ATP from ADP in the presence of a proton or sodium gradient. F-type ATPases consist of two structural domains, F(1) containing the extramembraneous catalytic core and F(0) containing the membrane proton channel, linked together by a central stalk and a peripheral stalk. During catalysis, ATP synthesis in the catalytic domain of F(1) is coupled via a rotary mechanism of the central stalk subunits to proton translocation. Its function is as follows. Component of the F(0) channel, it forms part of the peripheral stalk, linking F(1) to F(0). This chain is ATP synthase subunit b, found in Mycobacterium leprae (strain TN).